Here is a 194-residue protein sequence, read N- to C-terminus: Mitochondrial import inner membrane translocase subunit Tim22 (194 aa).

2 cysteine pairs are disulfide-bonded: Cys69–Cys141 and Cys160–Cys179. Helical transmembrane passes span Ala74–Ile94, Met123–Val143, and Ala170–Asp190.

The protein belongs to the Tim17/Tim22/Tim23 family. In terms of assembly, component of the TIM22 complex, whose core is composed of TIMM22, associated with peripheral protein FXC1/TIMM10B and the 70 kDa heterohexamer. In most cases, the 70 kDa complex is composed of TIMM9 and TIMM10 (TIMM10A or TIMM10B). A small fraction of the 70 kDa complex is composed of TIMM8 (TIMM8A/DDP1 or TIMM8B/DDP2) and TIMM13. The TIM22 complex also contains AGK and TIMM29. Interacts directly with TIMM9, TIMM10A and FXC1/TIMM10B. Interacts (when oxidized) with TIMM29; interaction is direct. Disulfide bonds promote efficient assembly of the TIM22 complex.

It localises to the mitochondrion inner membrane. Essential core component of the TIM22 complex, a complex that mediates the import and insertion of multi-pass transmembrane proteins into the mitochondrial inner membrane. In the TIM22 complex, it constitutes the voltage-activated and signal-gated channel. Forms a twin-pore translocase that uses the membrane potential as external driving force in 2 voltage-dependent steps. This Bos taurus (Bovine) protein is Mitochondrial import inner membrane translocase subunit Tim22 (TIMM22).